Consider the following 172-residue polypeptide: Large ribosomal subunit protein uL10 (172 aa).

Belongs to the universal ribosomal protein uL10 family. In terms of assembly, part of the ribosomal stalk of the 50S ribosomal subunit. The N-terminus interacts with L11 and the large rRNA to form the base of the stalk. The C-terminus forms an elongated spine to which L12 dimers bind in a sequential fashion forming a multimeric L10(L12)X complex.

Forms part of the ribosomal stalk, playing a central role in the interaction of the ribosome with GTP-bound translation factors. The polypeptide is Large ribosomal subunit protein uL10 (Xanthobacter autotrophicus (strain ATCC BAA-1158 / Py2)).